A 69-amino-acid chain; its full sequence is MLKGILYIIGIYQRYLSPLKGPTCRFYPSCSRYAHESLTRYGLVKGLWLTTIRILKCHPFHPGGVDPVK.

The protein belongs to the UPF0161 family.

It is found in the cell inner membrane. Functionally, could be involved in insertion of integral membrane proteins into the membrane. In Geobacter sulfurreducens (strain ATCC 51573 / DSM 12127 / PCA), this protein is Putative membrane protein insertion efficiency factor.